The following is a 294-amino-acid chain: MRVLVGGGTGFIGTALTQLLKARGHEVTLISRKPGPDRITWDDLTTSGLPRCDAAVNLAGENILNPLRRWNAAFQKEVLSSRLETTQTLARAIAKAPQPPQAWVLVTGVAYYQPSLTAEYDEDSPGGDFDFFSNLVTKWEAAARLPGDSTRQVVVRSGVVLGRGGGAIGHMLLPFRLGLGGPIGSGHQFFPWIHIRDLAGILAHALETSHVQGILNGVAPASSTTNAEFARALGTALGRPAFIPLPSAVVQAVFGRERAVMLLEGQKVVPRRTLAAGYRYSFPELGAALKEVIA.

Residues 31–32 (SR), 58–59 (LA), Glu-77, Arg-82, and Val-160 contribute to the NADP(+) site.

This sequence belongs to the NAD(P)-dependent epimerase/dehydratase family. SDR39U1 subfamily.

Putative NADP-dependent oxidoreductase. This chain is Epimerase family protein SDR39U1 (SDR39U1), found in Bos taurus (Bovine).